The primary structure comprises 382 residues: Gap junction alpha-1 protein (382 aa).

Residues 2 to 23 (GDWSALGKLLDKVQAYSTAGGK) lie on the Cytoplasmic side of the membrane. The residue at position 5 (S5) is a Phosphoserine. The chain crosses the membrane as a helical span at residues 24-44 (VWLSVLFIFRILLLGTAVESA). The Extracellular portion of the chain corresponds to 45–76 (WGDEQSAFRCNTQQPGCENVCYDKSFPISHVR). 2 cysteine pairs are disulfide-bonded: C54–C192 and C187–C198. Residues 77 to 97 (FWVLQIIFVSVPTLLYLAHVF) form a helical membrane-spanning segment. At 98-155 (YVMRKEEKLNKKEEELKVAQTDGVNVEMHLKQIEIKKFKYGIEEHGKVKMRGGLLRTY) the chain is on the cytoplasmic side. K144 participates in a covalent cross-link: Glycyl lysine isopeptide (Lys-Gly) (interchain with G-Cter in SUMO). The helical transmembrane segment at 156 to 176 (IISILFKSVFEVAFLLIQWYI) threads the bilayer. The Extracellular portion of the chain corresponds to 177-207 (YGFSLSAVYTCKRDPCPHQVDCFLSRPTEKT). A helical membrane pass occupies residues 208–228 (IFIIFMLVVSLVSLALNIIEL). The Cytoplasmic portion of the chain corresponds to 229-382 (FYVFFKGVKD…SRPRPDDLEI (154 aa)). K237 is covalently cross-linked (Glycyl lysine isopeptide (Lys-Gly) (interchain with G-Cter in SUMO)). Residues 244–382 (SDPYHATTGP…SRPRPDDLEI (139 aa)) are interaction with NOV. Residue Y247 is modified to Phosphotyrosine. Phosphoserine occurs at positions 255, 257, and 262. The interaction with UBQLN4 stretch occupies residues 264–382 (KYAYFNGCSS…SRPRPDDLEI (119 aa)). C271 is subject to S-nitrosocysteine. T275 is subject to Phosphothreonine. Phosphoserine is present on residues S306 and S314. Polar residues predominate over residues 317 to 332 (QNRMGQAGSTISNSHA). The disordered stretch occupies residues 317–382 (QNRMGQAGST…SRPRPDDLEI (66 aa)). At S325 the chain carries Phosphoserine; by CK1. Phosphothreonine is present on T326. S328 and S330 each carry phosphoserine; by CK1. Phosphoserine occurs at positions 344 and 365. The segment covering 362 to 374 (RPSSRASSRASSR) has biased composition (low complexity). S368 is subject to Phosphoserine; by PKC/PRKCG and PKC/PRKCD. Residues S369 and S373 each carry the phosphoserine modification.

It belongs to the connexin family. Alpha-type (group II) subfamily. As to quaternary structure, a connexon is composed of a hexamer of connexins. Interacts with SGSM3. Interacts with RIC1/CIP150. Interacts with CNST and CSNK1D. Interacts (via C-terminus) with TJP1. Interacts (via C-terminus) with SRC (via SH3 domain). Interacts (not ubiquitinated) with UBQLN4 (via UBA domain). Interacts with NOV. Interacts with TMEM65. Interacts with ANK3/ANKG and PKP2. Phosphorylation at Ser-325, Ser-328 and Ser-330 by CK1 modulates gap junction assembly. Phosphorylated at Ser-368 by PRKCG; phosphorylation induces disassembly of gap junction plaques and inhibition of gap junction activity. Phosphorylation at Ser-368 by PRKCD triggers its internalization into small vesicles leading to proteasome-mediated degradation. Post-translationally, sumoylated with SUMO1, SUMO2 and SUMO3, which may regulate the level of functional Cx43 gap junctions at the plasma membrane. May be desumoylated by SENP1 or SENP2. In terms of processing, S-nitrosylation at Cys-271 is enriched at the muscle endothelial gap junction in arteries, it augments channel permeability and may regulate of smooth muscle cell to endothelial cell communication. Acetylated in the developing cortex; leading to delocalization from the cell membrane.

Its subcellular location is the cell membrane. The protein localises to the cell junction. It localises to the gap junction. It is found in the endoplasmic reticulum. In terms of biological role, gap junction protein that acts as a regulator of bladder capacity. A gap junction consists of a cluster of closely packed pairs of transmembrane channels, the connexons, through which materials of low MW diffuse from one cell to a neighboring cell. May play a critical role in the physiology of hearing by participating in the recycling of potassium to the cochlear endolymph. Negative regulator of bladder functional capacity: acts by enhancing intercellular electrical and chemical transmission, thus sensitizing bladder muscles to cholinergic neural stimuli and causing them to contract. May play a role in cell growth inhibition through the regulation of NOV expression and localization. Plays an essential role in gap junction communication in the ventricles. This chain is Gap junction alpha-1 protein (GJA1), found in Oryctolagus cuniculus (Rabbit).